We begin with the raw amino-acid sequence, 254 residues long: Small ribosomal subunit protein eS1 (254 aa).

Alanine 2 is modified (N-acetylalanine; partial).

This sequence belongs to the eukaryotic ribosomal protein eS1 family. Component of the small ribosomal subunit. Mature ribosomes consist of a small (40S) and a large (60S) subunit. The 40S subunit contains about 33 different proteins and 1 molecule of RNA (18S). The 60S subunit contains about 49 different proteins and 3 molecules of RNA (25S, 5.8S and 5S).

Its subcellular location is the cytoplasm. The chain is Small ribosomal subunit protein eS1 from Zygosaccharomyces rouxii (strain ATCC 2623 / CBS 732 / NBRC 1130 / NCYC 568 / NRRL Y-229).